We begin with the raw amino-acid sequence, 245 residues long: Probable phosphatase KPK_3500 (245 aa).

His7, His9, His15, His40, Glu73, His101, His131, Asp192, and His194 together coordinate Zn(2+).

The protein belongs to the PHP family. Homotrimer. The cofactor is Zn(2+).

The protein is Probable phosphatase KPK_3500 of Klebsiella pneumoniae (strain 342).